Reading from the N-terminus, the 387-residue chain is MKALHFGAGNIGRGFIGKLLADAGAQLTFADVNQPLLDALNKRKSYQVNVVGEQARVEEVKNVSAVNSGSPEVVALIAEADIVTTAVGPQILARIAATVAQGLITRHQQGNTRPLNIIACENMVRGTSQLKQHVFAALSEDEQIWVEQHVGFVDSAVDRIVPPSEAGSTDILAVTVETFSEWIVDGTQFKGQPPEIVGMELTDNLMAFVERKLFTLNTGHAITAYLGQLAGHQTIRDAILDPAVRQTVKGAMEESGAVLIKRYAFDPQKHAAYINKILSRFENPYLHDDVERVGRQPLRKLSAGDRLIKPLLGTLEYQLPHDSLVTGIAAAMSYRSEQDPQAQELVTLLAQLGPKAALAQISGLPADSEVVEQAVSVYNAMQQKLAH.

3–14 (ALHFGAGNIGRG) contacts NAD(+).

This sequence belongs to the mannitol dehydrogenase family.

The enzyme catalyses D-mannitol 1-phosphate + NAD(+) = beta-D-fructose 6-phosphate + NADH + H(+). The polypeptide is Mannitol-1-phosphate 5-dehydrogenase (Yersinia pseudotuberculosis serotype O:1b (strain IP 31758)).